The sequence spans 160 residues: MQFMLLFSRQGKLRLQKWYVPLSDKEKKKITRELVQTVLARKPKMCSFLEWRDLKIVYKRYASLYFCCAIEDQDNELITLEIIHRYVELLDKYFGSVCELDIIFNFEKAYFILDEFLLGGEVQETSKKNVLKAIEQADLLQEDAKEAETPRSVLEEIGLT.

Belongs to the adaptor complexes small subunit family. As to quaternary structure, adaptor protein complex 1 (AP-1) is a heterotetramer composed of two large adaptins (gamma-type subunit AP1G1 and beta-type subunit AP1B1), a medium adaptin (mu-type subunit AP1M1 or AP1M2) and a small adaptin (sigma-type subunit AP1S1 or AP1S2 or AP1S3). Binds to MUC1. In terms of tissue distribution, widely expressed.

It is found in the golgi apparatus. The protein localises to the cytoplasmic vesicle membrane. It localises to the membrane. Its subcellular location is the clathrin-coated pit. In terms of biological role, subunit of clathrin-associated adaptor protein complex 1 that plays a role in protein sorting in the late-Golgi/trans-Golgi network (TGN) and/or endosomes. The AP complexes mediate both the recruitment of clathrin to membranes and the recognition of sorting signals within the cytosolic tails of transmembrane cargo molecules. The protein is AP-1 complex subunit sigma-2 (Ap1s2) of Mus musculus (Mouse).